Consider the following 400-residue polypeptide: Protection of telomeres homolog 1 (400 aa).

Belongs to the telombin family. Expressed in sperm and oocytes.

It is found in the nucleus. The protein resides in the nucleus envelope. The protein localises to the chromosome. It localises to the telomere. Its function is as follows. Telomeric DNA-binding protein, which binds to single-stranded C-rich repeat sequences, with high specificity to the 5'-GCCTAA-3' sequence. Repeat sequence binding can be at the 5' or 3' telomeric end. May have a role in protecting the 5' end of the C-rich strand of the telomere. Acts redundantly with pot-2 to negatively regulate telomerase-mediated telomere extension. Also regulates telomere length by the telomerase-independent telomere maintenance pathway called ALT (alternative lengthening of telomeres). Through sun-1, anchors telomeres to the nuclear envelope in embryos. This Caenorhabditis elegans protein is Protection of telomeres homolog 1.